Here is an 807-residue protein sequence, read N- to C-terminus: Dynein axonemal intermediate chain 4 (807 aa).

Polar residues-rich tracts occupy residues 1–11 and 22–31; these read MHSSPTSTRKQ and PRKSISFINP. Disordered stretches follow at residues 1-44 and 300-320; these read MHSS…AASN and YSSK…DSES. Residues 32–43 are compositionally biased toward low complexity; that stretch reads SKSSAGKGYAAS. A compositionally biased stretch (basic and acidic residues) spans 308–317; that stretch reads AKDRDPKIQD. 6 WD repeats span residues 493-533, 542-590, 617-657, 661-701, 704-743, and 749-788; these read QSSY…NIPV, KHLG…DCHD, SRQA…QYLE, GHKG…PFLS, PTTY…LDPL, and NPGI…TASD.

Part of the multisubunit axonemal dynein complex formed at least of two heavy chains and a number of intermediate and light chains. Associated with axonemal dynein subunits such as, DNAH2, DNAI3, and DYNLT1. Interacts with DYNLT1. Highly expressed in tissues containing motile cilia, including the trachea, lung, oviduct, and testis.

Its subcellular location is the cytoplasm. It is found in the cytoskeleton. The protein resides in the flagellum axoneme. It localises to the cilium axoneme. The protein localises to the dynein axonemal particle. Its function is as follows. Plays a critical role in the assembly of axonemal dynein complex, thereby playing a role in ciliary motility. This is Dynein axonemal intermediate chain 4 (Dnai4) from Mus musculus (Mouse).